We begin with the raw amino-acid sequence, 466 residues long: MGWITEDLIRRNAEHNDCVIFSLEELSLHQQEIERLEHIDKWCRDLKILYLQNNLIGKIENVSKLKKLEYLNLALNNIEKIENLEGCEELAKLDLTVNFIGELSSIKNLQHNIHLKELFLMGNPCASFDHYREFVVATLPQLKWLDGKEIEPSERIKALQDYSVIEPQIREQEKDHCLKRAKLKEEAQRKHQEEDKNEDKRSNAGFDGRWYTDINATLSSLESKDHLQAPDTEEHNTKKLDNSEDDLEFWNKPCLFTPESRLETLRHMEKQRKKQEKLSEKKKKVKPPRTLITEDGKALNVNEPKIDFSLKDNEKQIILDLAVYRYMDTSLIDVDVQPTYVRVMIKGKPFQLVLPAEVKPDSSSAKRSQTTGHLVICMPKVGEVITGGQRAFKSMKTTSDRSREQTNTRSKHMEKLEVDPSKHSFPDVTNIVQEKKHTPRRRPEPKIIPSEEDPTFEDNPEVPPLI.

LRR repeat units follow at residues 22–43, 45–66, 67–88, and 89–110; these read SLEE…DKWC, DLKI…SKLK, KLEY…EGCE, and ELAK…KNLQ. The 39-residue stretch at 123–161 folds into the LRRCT domain; that stretch reads NPCASFDHYREFVVATLPQLKWLDGKEIEPSERIKALQD. Positions 178 to 204 form a coiled coil; it reads LKRAKLKEEAQRKHQEEDKNEDKRSNA. The segment covering 185 to 202 has biased composition (basic and acidic residues); it reads EEAQRKHQEEDKNEDKRS. 3 disordered regions span residues 185–206, 268–288, and 391–466; these read EEAQ…NAGF, MEKQ…VKPP, and AFKS…PPLI. The segment covering 269-287 has biased composition (basic residues); sequence EKQRKKQEKLSEKKKKVKP. The 96-residue stretch at 301-396 folds into the CS domain; sequence VNEPKIDFSL…GGQRAFKSMK (96 aa). 2 stretches are compositionally biased toward basic and acidic residues: residues 398–425 and 433–445; these read TSDR…KHSF and QEKK…RPEP. The span at 450–460 shows a compositional bias: acidic residues; it reads SEEDPTFEDNP.

This sequence belongs to the tilB family. In terms of assembly, interacts (via CS domain) with ZMYND10 (via C-terminus). Expressed predominantly in testis and in nasal epithelial cells.

It localises to the cytoplasm. It is found in the cell projection. The protein localises to the cilium. Its subcellular location is the dynein axonemal particle. The protein resides in the flagellum. Functionally, involved in dynein arm assembly, is important for expression and transporting outer dynein arm (ODA) proteins from the cytoplasm to the cilia. Acts as a crucial component in the formation and motility of spermatozoal flagella. The chain is Dynein axonemal assembly factor 11 from Homo sapiens (Human).